Reading from the N-terminus, the 200-residue chain is Superoxide dismutase [Mn] 2 (200 aa).

Positions 28, 76, 158, and 162 each coordinate Mn(2+).

It belongs to the iron/manganese superoxide dismutase family. The cofactor is Mn(2+).

It catalyses the reaction 2 superoxide + 2 H(+) = H2O2 + O2. Functionally, destroys superoxide anion radicals which are normally produced within the cells and which are toxic to biological systems. The protein is Superoxide dismutase [Mn] 2 (sod2) of Halobacterium salinarum (strain ATCC 700922 / JCM 11081 / NRC-1) (Halobacterium halobium).